Here is a 219-residue protein sequence, read N- to C-terminus: Claudin-3 (219 aa).

Residues 1-8 (MSMGLEIT) lie on the Cytoplasmic side of the membrane. Residues 9–29 (GTSLAVLGWLCTIVCCALPMW) traverse the membrane as a helical segment. At 30-80 (RVSAFIGSSIITAQITWEGLWMNCVVQSTGQMQCKMYDSLLALPQDLQAAR) the chain is on the extracellular side. Residues 81 to 101 (ALIVVSILLAAFGLLVALVGA) traverse the membrane as a helical segment. The Cytoplasmic portion of the chain corresponds to 102–115 (QCTNCVQDETAKAK). A helical membrane pass occupies residues 116 to 136 (ITIVAGVLFLLAAVLTLVPVS). The Extracellular portion of the chain corresponds to 137-161 (WSANTIIRDFYNPLVPEAQKREMGT). A helical transmembrane segment spans residues 162–182 (GLYVGWAAAALQLLGGALLCC). The Cytoplasmic portion of the chain corresponds to 183–219 (SCPPREKYAPTKILYSAPRSTGPGTGTGTAYDRKDYV). Phosphotyrosine is present on Tyr197. Ser198 carries the phosphoserine modification. Positions 218–219 (YV) are interactions with TJP1, TJP2 and TJP3.

The protein belongs to the claudin family. In terms of assembly, can form homo- and heteropolymers with other CLDN. Homopolymers interact with CLDN1 and CLDN2 homopolymers. Interacts in cis (within the same plasma membrane) with CLDN19. Directly interacts with TJP1/ZO-1, TJP2/ZO-2 and TJP3/ZO-3.

It localises to the cell junction. The protein resides in the tight junction. It is found in the cell membrane. Functionally, plays a major role in tight junction-specific obliteration of the intercellular space, through calcium-independent cell-adhesion activity. The sequence is that of Claudin-3 (Cldn3) from Rattus norvegicus (Rat).